The sequence spans 359 residues: UDP-3-O-acylglucosamine N-acyltransferase (359 aa).

The active-site Proton acceptor is H248.

Belongs to the transferase hexapeptide repeat family. LpxD subfamily. In terms of assembly, homotrimer.

The enzyme catalyses a UDP-3-O-[(3R)-3-hydroxyacyl]-alpha-D-glucosamine + a (3R)-hydroxyacyl-[ACP] = a UDP-2-N,3-O-bis[(3R)-3-hydroxyacyl]-alpha-D-glucosamine + holo-[ACP] + H(+). It participates in bacterial outer membrane biogenesis; LPS lipid A biosynthesis. Catalyzes the N-acylation of UDP-3-O-acylglucosamine using 3-hydroxyacyl-ACP as the acyl donor. Is involved in the biosynthesis of lipid A, a phosphorylated glycolipid that anchors the lipopolysaccharide to the outer membrane of the cell. The sequence is that of UDP-3-O-acylglucosamine N-acyltransferase from Chlamydia abortus (strain DSM 27085 / S26/3) (Chlamydophila abortus).